The following is a 331-amino-acid chain: WW domain-containing protein C2F3.14c (331 aa).

Residues 1–184 form a disordered region; it reads MSSSKDCKAT…TNENQAQPSI (184 aa). Over residues 9–22 the composition is skewed to polar residues; it reads ATSNVDQTIPASNV. A compositionally biased stretch (low complexity) spans 23–41; the sequence is NSGDFISSNTSSSNSENSN. Residues 57 to 89 show a composition bias toward polar residues; it reads SFISENTPKNTFESTQTYENLESISKNEPTSEA. The span at 105 to 145 shows a compositional bias: pro residues; that stretch reads REPPLPNEPVPEEPLPGEPPLPDEPVPEEPLPGEPPLPNEP. Residues 158–184 show a composition bias toward polar residues; sequence SDETVSETSKNDTSNSPTNENQAQPSI. The WW domain maps to 187–220; sequence SEGHRIAAIWDPSQQAYYFWDTLTNTTSWNNPLE. Positions 290–309 are disordered; that stretch reads YTRKEMEQMKRRTKEKKEMK. Basic and acidic residues predominate over residues 292 to 309; the sequence is RKEMEQMKRRTKEKKEMK.

The protein resides in the nucleus. The chain is WW domain-containing protein C2F3.14c from Schizosaccharomyces pombe (strain 972 / ATCC 24843) (Fission yeast).